Consider the following 379-residue polypeptide: L-lactate dehydrogenase (379 aa).

In terms of domain architecture, FMN hydroxy acid dehydrogenase spans 1-379 (MIISSSTDYR…ITSELLVREP (379 aa)). Tyr-24 provides a ligand contact to substrate. 2 residues coordinate FMN: Ser-106 and Gln-127. Tyr-129 lines the substrate pocket. Position 155 (Thr-155) interacts with FMN. Position 164 (Arg-164) interacts with substrate. Lys-251 lines the FMN pocket. His-275 (proton acceptor) is an active-site residue. Residue Arg-278 participates in substrate binding. 306-330 (DSGIRSGLDVVRMIALGADAAMLGR) is a binding site for FMN.

Belongs to the FMN-dependent alpha-hydroxy acid dehydrogenase family. Requires FMN as cofactor.

Its subcellular location is the cell membrane. It catalyses the reaction (S)-lactate + A = pyruvate + AH2. In terms of biological role, catalyzes the conversion of L-lactate to pyruvate. Is coupled to the respiratory chain. This chain is L-lactate dehydrogenase, found in Alcaligenes faecalis.